The following is a 159-amino-acid chain: Ribosomal RNA large subunit methyltransferase H (159 aa).

Residues Leu-76, Gly-108, and 127 to 132 (MSKMTF) contribute to the S-adenosyl-L-methionine site.

It belongs to the RNA methyltransferase RlmH family. As to quaternary structure, homodimer.

The protein localises to the cytoplasm. It carries out the reaction pseudouridine(1915) in 23S rRNA + S-adenosyl-L-methionine = N(3)-methylpseudouridine(1915) in 23S rRNA + S-adenosyl-L-homocysteine + H(+). Specifically methylates the pseudouridine at position 1915 (m3Psi1915) in 23S rRNA. This chain is Ribosomal RNA large subunit methyltransferase H, found in Ureaplasma parvum serovar 3 (strain ATCC 27815 / 27 / NCTC 11736).